Here is a 357-residue protein sequence, read N- to C-terminus: UDP-N-acetylglucosamine--N-acetylmuramyl-(pentapeptide) pyrophosphoryl-undecaprenol N-acetylglucosamine transferase (357 aa).

UDP-N-acetyl-alpha-D-glucosamine is bound by residues 13–15, asparagine 122, arginine 163, serine 191, and glutamine 288; that span reads TGG.

Belongs to the glycosyltransferase 28 family. MurG subfamily.

The protein localises to the cell inner membrane. The catalysed reaction is di-trans,octa-cis-undecaprenyl diphospho-N-acetyl-alpha-D-muramoyl-L-alanyl-D-glutamyl-meso-2,6-diaminopimeloyl-D-alanyl-D-alanine + UDP-N-acetyl-alpha-D-glucosamine = di-trans,octa-cis-undecaprenyl diphospho-[N-acetyl-alpha-D-glucosaminyl-(1-&gt;4)]-N-acetyl-alpha-D-muramoyl-L-alanyl-D-glutamyl-meso-2,6-diaminopimeloyl-D-alanyl-D-alanine + UDP + H(+). It functions in the pathway cell wall biogenesis; peptidoglycan biosynthesis. Its function is as follows. Cell wall formation. Catalyzes the transfer of a GlcNAc subunit on undecaprenyl-pyrophosphoryl-MurNAc-pentapeptide (lipid intermediate I) to form undecaprenyl-pyrophosphoryl-MurNAc-(pentapeptide)GlcNAc (lipid intermediate II). The polypeptide is UDP-N-acetylglucosamine--N-acetylmuramyl-(pentapeptide) pyrophosphoryl-undecaprenol N-acetylglucosamine transferase (Gloeobacter violaceus (strain ATCC 29082 / PCC 7421)).